The following is an 89-amino-acid chain: MAHKKAGGSSRNGRDSESKRLGVKKFGGESVIAGNIIVRQRGTRWHPGDNVGIGKDHTLFALSEGKVSFQRKAGNRSYVSVIPMVEAAE.

The disordered stretch occupies residues 1-22; sequence MAHKKAGGSSRNGRDSESKRLG.

The protein belongs to the bacterial ribosomal protein bL27 family.

The protein is Large ribosomal subunit protein bL27 of Bartonella tribocorum (strain CIP 105476 / IBS 506).